The primary structure comprises 488 residues: Fumarate hydratase, mitochondrial (488 aa).

The N-terminal 24 residues, 1 to 24 (MLRFTNCSCKTFVKSSYKLNIRRM), are a transit peptide targeting the mitochondrion. Substrate-binding positions include 124–126 (SGT), 154–157 (HPNN), 164–166 (SSN), and T212. Catalysis depends on H213, which acts as the Proton donor/acceptor. S343 is a catalytic residue. Substrate is bound by residues S344 and 349-351 (KVN). Residue T428 is modified to Phosphothreonine.

This sequence belongs to the class-II fumarase/aspartase family. Fumarase subfamily. As to quaternary structure, homotetramer.

It is found in the mitochondrion matrix. It localises to the cytoplasm. Its subcellular location is the nucleus. It catalyses the reaction (S)-malate = fumarate + H2O. It participates in carbohydrate metabolism; tricarboxylic acid cycle; (S)-malate from fumarate: step 1/1. Catalyzes the reversible stereospecific interconversion of fumarate to L-malate. In mitochondrion, catalyzes the hydration of fumarate to L-malate in the tricarboxylic acid (TCA) cycle to facilitate a transition step in the production of energy in the form of NADH. In cytoplasm and nucleus, involved in DNA repair in response to DNA damage: following DNA double-strand breaks (DSBs), translocates from the cytosol to the nucleus and promotes DNA repair by catalyzing the dehydration of L-malate to fumarate. The sequence is that of Fumarate hydratase, mitochondrial from Saccharomyces cerevisiae (strain ATCC 204508 / S288c) (Baker's yeast).